Consider the following 446-residue polypeptide: Methylenetetrahydrofolate--tRNA-(uracil-5-)-methyltransferase TrmFO (446 aa).

Position 8-13 (8-13 (GAGLAG)) interacts with FAD.

Belongs to the MnmG family. TrmFO subfamily. The cofactor is FAD.

The protein resides in the cytoplasm. It carries out the reaction uridine(54) in tRNA + (6R)-5,10-methylene-5,6,7,8-tetrahydrofolate + NADH + H(+) = 5-methyluridine(54) in tRNA + (6S)-5,6,7,8-tetrahydrofolate + NAD(+). The catalysed reaction is uridine(54) in tRNA + (6R)-5,10-methylene-5,6,7,8-tetrahydrofolate + NADPH + H(+) = 5-methyluridine(54) in tRNA + (6S)-5,6,7,8-tetrahydrofolate + NADP(+). Its function is as follows. Catalyzes the folate-dependent formation of 5-methyl-uridine at position 54 (M-5-U54) in all tRNAs. The chain is Methylenetetrahydrofolate--tRNA-(uracil-5-)-methyltransferase TrmFO from Paracoccus denitrificans (strain Pd 1222).